Reading from the N-terminus, the 604-residue chain is Uptake hydrogenase large subunit (604 aa).

Cysteine 76, cysteine 79, cysteine 583, and cysteine 586 together coordinate Ni(2+).

This sequence belongs to the [NiFe]/[NiFeSe] hydrogenase large subunit family. In terms of assembly, heterodimer of a large and a small subunit. Requires Ni(2+) as cofactor.

The protein resides in the cell membrane. It carries out the reaction H2 + A = AH2. In terms of biological role, this enzyme recycles the H(2) produced by nitrogenase to increase the production of ATP and to protect nitrogenase against inhibition or damage by O(2) under carbon- or phosphate-limited conditions. The sequence is that of Uptake hydrogenase large subunit (hoxL) from Afipia carboxidovorans (strain ATCC 49405 / DSM 1227 / KCTC 32145 / OM5) (Oligotropha carboxidovorans).